We begin with the raw amino-acid sequence, 295 residues long: Fructose-bisphosphate aldolase class 1 (295 aa).

Glu176 (proton acceptor) is an active-site residue. The active-site Schiff-base intermediate with dihydroxyacetone-P is Lys213.

It belongs to the class I fructose-bisphosphate aldolase family.

It carries out the reaction beta-D-fructose 1,6-bisphosphate = D-glyceraldehyde 3-phosphate + dihydroxyacetone phosphate. Its pathway is carbohydrate degradation; glycolysis; D-glyceraldehyde 3-phosphate and glycerone phosphate from D-glucose: step 4/4. The polypeptide is Fructose-bisphosphate aldolase class 1 (Treponema denticola (strain ATCC 35405 / DSM 14222 / CIP 103919 / JCM 8153 / KCTC 15104)).